A 315-amino-acid chain; its full sequence is Ribosomal RNA small subunit methyltransferase H (315 aa).

Residues 37–39 (GGH), Asp-57, Leu-91, Asp-105, and Gln-112 each bind S-adenosyl-L-methionine.

The protein belongs to the methyltransferase superfamily. RsmH family.

It is found in the cytoplasm. The enzyme catalyses cytidine(1402) in 16S rRNA + S-adenosyl-L-methionine = N(4)-methylcytidine(1402) in 16S rRNA + S-adenosyl-L-homocysteine + H(+). Functionally, specifically methylates the N4 position of cytidine in position 1402 (C1402) of 16S rRNA. This chain is Ribosomal RNA small subunit methyltransferase H, found in Syntrophus aciditrophicus (strain SB).